The following is a 1671-amino-acid chain: Kinesin-like protein unc-104 (1671 aa).

Residues 3–351 enclose the Kinesin motor domain; it reads SVKVAVRVRP…LRYADRAKQI (349 aa). 97–104 serves as a coordination point for ATP; sequence GQTGAGKS. A coiled-coil region spans residues 358–437; it reads NEDANAKLIR…IAELNETWEE (80 aa). Positions 391–413 are disordered; sequence DELNKSTTGIKSPSKSRNRNGST. Over residues 395–413 the composition is skewed to polar residues; that stretch reads KSTTGIKSPSKSRNRNGST. The region spanning 500-566 is the FHA domain; it reads TRLGTHEANV…LKTGSRVILG (67 aa). A coiled-coil region spans residues 577 to 674; that stretch reads EQARELREKI…EEQSMTMSMY (98 aa). The interval 949-973 is disordered; the sequence is DVDSGRGIDSNSASDCPENAEEPGE. The PH domain maps to 1538-1636; the sequence is VVARKGLLNV…WLYAINPLLA (99 aa).

This sequence belongs to the TRAFAC class myosin-kinesin ATPase superfamily. Kinesin family. Unc-104 subfamily. As to quaternary structure, monomer.

Its subcellular location is the cytoplasm. It is found in the cytoskeleton. Its function is as follows. Required for presynaptic maturation, has a role in axonal transport of dense-core vesicles carrying synaptic vesicle precursors, components required for the morphological transformation of axonal growth cones to mature boutons. The sequence is that of Kinesin-like protein unc-104 from Drosophila pseudoobscura pseudoobscura (Fruit fly).